Reading from the N-terminus, the 288-residue chain is Aquaporin NIP2-1 (288 aa).

Met-1 is modified (N-acetylmethionine). Helical transmembrane passes span 50-70 (LLAELVGTYYLIFAGCAAIAV) and 77-97 (VVTLVGIAVVWGIVIMVLVYC). An NPA 1 motif is present at residues 106–108 (NPA). A run of 3 helical transmembrane segments spans residues 126 to 146 (AYITVQVIGSTLASATLRLLF), 170 to 190 (LQAFVMEFIITGFLMLVVCAV), and 202 to 222 (GLIIGATVTLNVIFAGEVSGA). The NPA 2 motif lies at 225-227 (NPA). Residues 234–254 (LVWGCYKGIWIYLLAPTLGAV) traverse the membrane as a helical segment. At Ser-278 the chain carries Phosphoserine.

It belongs to the MIP/aquaporin (TC 1.A.8) family. NIP (TC 1.A.8.12) subfamily. In terms of tissue distribution, specifically expressed in roots with high expression in root elongation zone and root stele.

The protein resides in the endoplasmic reticulum membrane. Functionally, low water transport activity in yeast cells. The sequence is that of Aquaporin NIP2-1 (NIP2-1) from Arabidopsis thaliana (Mouse-ear cress).